We begin with the raw amino-acid sequence, 1859 residues long: Protein TIC 214 (1859 aa).

6 helical membrane-spanning segments follow: residues Ile-18–Gly-38, Phe-64–Leu-84, Pro-87–His-107, Leu-124–Leu-144, Val-172–Ile-192, and Ile-221–Ile-241. Positions Lys-247–Glu-314 are disordered. Residues Gly-256–Thr-268 show a composition bias toward acidic residues. The span at Lys-273 to Glu-284 shows a compositional bias: basic and acidic residues. Residues Glu-295 to Glu-306 are compositionally biased toward acidic residues.

Belongs to the TIC214 family. As to quaternary structure, part of the Tic complex.

The protein resides in the plastid. Its subcellular location is the chloroplast inner membrane. In terms of biological role, involved in protein precursor import into chloroplasts. May be part of an intermediate translocation complex acting as a protein-conducting channel at the inner envelope. The sequence is that of Protein TIC 214 from Buxus microphylla (Littleleaf boxwood).